Here is a 488-residue protein sequence, read N- to C-terminus: Protein nucleotidyltransferase YdiU (488 aa).

ATP is bound by residues Gly-91, Gly-93, Arg-94, Lys-114, Asp-126, Gly-127, Arg-177, and Arg-184. Catalysis depends on Asp-253, which acts as the Proton acceptor. The Mg(2+) site is built by Asn-254 and Asp-263. ATP is bound at residue Asp-263.

This sequence belongs to the SELO family. Mg(2+) serves as cofactor. Mn(2+) is required as a cofactor.

It catalyses the reaction L-seryl-[protein] + ATP = 3-O-(5'-adenylyl)-L-seryl-[protein] + diphosphate. It carries out the reaction L-threonyl-[protein] + ATP = 3-O-(5'-adenylyl)-L-threonyl-[protein] + diphosphate. The catalysed reaction is L-tyrosyl-[protein] + ATP = O-(5'-adenylyl)-L-tyrosyl-[protein] + diphosphate. The enzyme catalyses L-histidyl-[protein] + UTP = N(tele)-(5'-uridylyl)-L-histidyl-[protein] + diphosphate. It catalyses the reaction L-seryl-[protein] + UTP = O-(5'-uridylyl)-L-seryl-[protein] + diphosphate. It carries out the reaction L-tyrosyl-[protein] + UTP = O-(5'-uridylyl)-L-tyrosyl-[protein] + diphosphate. In terms of biological role, nucleotidyltransferase involved in the post-translational modification of proteins. It can catalyze the addition of adenosine monophosphate (AMP) or uridine monophosphate (UMP) to a protein, resulting in modifications known as AMPylation and UMPylation. The protein is Protein nucleotidyltransferase YdiU of Bacillus thuringiensis (strain Al Hakam).